A 466-amino-acid chain; its full sequence is Muscarinic acetylcholine receptor M2 (466 aa).

The Extracellular portion of the chain corresponds to 1–22 (MNNSTNSSNNSLALTSPYKTFE). Residues asparagine 2, asparagine 3, asparagine 6, and asparagine 9 are each glycosylated (N-linked (GlcNAc...) asparagine). A helical transmembrane segment spans residues 23 to 45 (VVFIVLVAGSLSLVTIIGNILVM). Residues 46–59 (VSIKVNRHLQTVNN) lie on the Cytoplasmic side of the membrane. Residues 60 to 80 (YFLFSLACADLIIGVFSMNLY) form a helical membrane-spanning segment. Topologically, residues 81–97 (TLYTVIGYWPLGPVVCD) are extracellular. Cysteine 96 and cysteine 176 are oxidised to a cystine. Residues 98 to 119 (LWLALDYVVSNASVMNLLIISF) form a helical membrane-spanning segment. The Important for signaling motif lies at 120 to 122 (DRY). Residues 120–139 (DRYFCVTKPLTYPVKRTTKM) lie on the Cytoplasmic side of the membrane. The helical transmembrane segment at 140–162 (AGMMIAAAWVLSFILWAPAILFW) threads the bilayer. Residues 163–184 (QFIVGVRTVEDGECYIQFFSNA) are Extracellular-facing. The chain crosses the membrane as a helical span at residues 185–209 (AVTFGTAIAAFYLPVIIMTVLYWHI). Residues 210 to 387 (SRASKSRIKK…PPSREKKVTR (178 aa)) are Cytoplasmic-facing. The tract at residues 218–355 (KKDKKEPVAN…VVGSSGQNGD (138 aa)) is disordered. Phosphoserine is present on serine 232. Positions 254-270 (GLEHNKIQNGKAPRDPV) are enriched in basic and acidic residues. 3 stretches are compositionally biased toward polar residues: residues 284–293 (NDSTSVSAVA), 304–313 (DENTVSTSLG), and 334–353 (SDSC…SGQN). The chain crosses the membrane as a helical span at residues 388 to 410 (TILAILLAFIITWAPYNVMVLIN). Topologically, residues 411 to 418 (TFCAPCIP) are extracellular. Cysteines 413 and 416 form a disulfide. A helical membrane pass occupies residues 419-442 (NTVWTIGYWLCYINSTINPACYAL). The short motif at 436–440 (NPACY) is the Important for signaling element. Over 443-466 (CNATFKKTFKHLLMCHYKNIGATR) the chain is Cytoplasmic. Residues threonine 446, threonine 450, and threonine 465 each carry the phosphothreonine modification.

This sequence belongs to the G-protein coupled receptor 1 family. Muscarinic acetylcholine receptor subfamily. CHRM2 sub-subfamily. Interacts with ARRB1 and ARRB2. Interacts with RACK1; the interaction regulates CHRM2 internalization. Phosphorylated in response to agonist treatment.

The protein resides in the cell membrane. It is found in the postsynaptic cell membrane. The muscarinic acetylcholine receptor mediates various cellular responses, including inhibition of adenylate cyclase, breakdown of phosphoinositides and modulation of potassium channels through the action of G proteins. Primary transducing effect is adenylate cyclase inhibition. Signaling promotes phospholipase C activity, leading to the release of inositol trisphosphate (IP3); this then triggers calcium ion release into the cytosol. The chain is Muscarinic acetylcholine receptor M2 (CHRM2) from Homo sapiens (Human).